Consider the following 149-residue polypeptide: Low molecular weight protein-tyrosine-phosphatase Wzb (149 aa).

The Nucleophile role is filled by Cys9. Residue Arg15 is part of the active site. Asp115 serves as the catalytic Proton donor.

The protein belongs to the low molecular weight phosphotyrosine protein phosphatase family.

It catalyses the reaction O-phospho-L-tyrosyl-[protein] + H2O = L-tyrosyl-[protein] + phosphate. It functions in the pathway glycan metabolism; exopolysaccharide biosynthesis. Dephosphorylates Wzc. Required for the extracellular polysaccharide colanic acid synthesis. Probably involved in the export of colanic acid from the cell to medium. Involved in protection of cells against contact-dependent growth inhibition (CDI). The protein is Low molecular weight protein-tyrosine-phosphatase Wzb (wzb) of Salmonella typhimurium (strain LT2 / SGSC1412 / ATCC 700720).